A 240-amino-acid chain; its full sequence is Penton protein H240R (240 aa).

The protein belongs to the asfivirus H240R family.

The protein localises to the virion. Forms the penton at the fivefold vertices of the icosahedral capsid. Together with the minor capsid proteins (p17, p49, and M1249L), forms a complicated network immediately below the outer capsid shell, stabilizing the whole capsid. This chain is Penton protein H240R, found in African swine fever virus (strain Badajoz 1971 Vero-adapted) (Ba71V).